We begin with the raw amino-acid sequence, 198 residues long: Anthranilate synthase component 2 (198 aa).

The Glutamine amidotransferase type-1 domain occupies 2–198 (NVVVVDNYDS…GNFLDAAAAH (197 aa)). An L-glutamine-binding site is contributed by 57 to 59 (GPG). C87 serves as the catalytic Nucleophile; for GATase activity. Residue 137–138 (SL) coordinates L-glutamine. Residues H175 and E177 each act as for GATase activity in the active site.

In terms of assembly, heterotetramer consisting of two non-identical subunits: a beta subunit (TrpG) and a large alpha subunit (TrpE).

It catalyses the reaction chorismate + L-glutamine = anthranilate + pyruvate + L-glutamate + H(+). Its pathway is amino-acid biosynthesis; L-tryptophan biosynthesis; L-tryptophan from chorismate: step 1/5. Part of a heterotetrameric complex that catalyzes the two-step biosynthesis of anthranilate, an intermediate in the biosynthesis of L-tryptophan. In the first step, the glutamine-binding beta subunit (TrpG) of anthranilate synthase (AS) provides the glutamine amidotransferase activity which generates ammonia as a substrate that, along with chorismate, is used in the second step, catalyzed by the large alpha subunit of AS (TrpE) to produce anthranilate. In the absence of TrpG, TrpE can synthesize anthranilate directly from chorismate and high concentrations of ammonia. The polypeptide is Anthranilate synthase component 2 (trpG) (Halobacterium salinarum (strain ATCC 700922 / JCM 11081 / NRC-1) (Halobacterium halobium)).